The sequence spans 201 residues: Proteinase inhibitor type-2 CEVI57 (201 aa).

A signal peptide spans 1-23 (MAVYKVSFLAHLLVLGMYLLVST). Tandem repeats lie at residues 27 to 83 (ANAC…DPKN), 84 to 143 (PNIC…IEPK), and 144 to 199 (GCTK…QSIS). Cystine bridges form between C30/C118, C34/C114, C42/C124, C54/C91, C57/C75, C58/C87, C64/C100, and C117/C135.

Belongs to the protease inhibitor I20 (potato type II proteinase inhibitor) family.

The sequence is that of Proteinase inhibitor type-2 CEVI57 (CEVI57) from Solanum lycopersicum (Tomato).